A 242-amino-acid polypeptide reads, in one-letter code: Ribonuclease PH (242 aa).

Phosphate is bound by residues R86 and G124–R126.

The protein belongs to the RNase PH family. In terms of assembly, homohexameric ring arranged as a trimer of dimers.

The catalysed reaction is tRNA(n+1) + phosphate = tRNA(n) + a ribonucleoside 5'-diphosphate. Functionally, phosphorolytic 3'-5' exoribonuclease that plays an important role in tRNA 3'-end maturation. Removes nucleotide residues following the 3'-CCA terminus of tRNAs; can also add nucleotides to the ends of RNA molecules by using nucleoside diphosphates as substrates, but this may not be physiologically important. Probably plays a role in initiation of 16S rRNA degradation (leading to ribosome degradation) during starvation. In Caulobacter sp. (strain K31), this protein is Ribonuclease PH.